Reading from the N-terminus, the 89-residue chain is uncharacterized protein (89 aa).

This is an uncharacterized protein from Archaeoglobus fulgidus (strain ATCC 49558 / DSM 4304 / JCM 9628 / NBRC 100126 / VC-16).